The chain runs to 824 residues: Probable receptor-like protein kinase At5g24010 (824 aa).

The first 24 residues, 1–24 (MAFPINLTQTLLFFFCPLLHLSFA), serve as a signal peptide directing secretion. N-linked (GlcNAc...) asparagine glycans are attached at residues Asn-6, Asn-41, Asn-204, Asn-227, and Asn-291. Residues 25–406 (AFTPTDNYLI…SSEVVSGKRN (382 aa)) lie on the Extracellular side of the membrane. A helical transmembrane segment spans residues 407–427 (VVWIVVGSVLGGFVFLSLFFL). At 428 to 824 (SVLCLCRRKN…FSQLMTNAGR (397 aa)) the chain is on the cytoplasmic side. Residues 440–467 (TRSSESTGWTPLRRFRGSSNSRTTERTV) form a disordered region. A compositionally biased stretch (polar residues) spans 456–467 (GSSNSRTTERTV). The 276-residue stretch at 489–764 (FDRSLVIGVG…VLWNLEHVLQ (276 aa)) folds into the Protein kinase domain. Residues 495 to 503 (IGVGGFGMV) and Lys-517 contribute to the ATP site. The active-site Proton acceptor is the Asp-613. The segment at 777 to 803 (DYGDVTDPRTARQGLSNGSNIERDYGD) is disordered.

The protein belongs to the protein kinase superfamily. Ser/Thr protein kinase family.

The protein localises to the membrane. The sequence is that of Probable receptor-like protein kinase At5g24010 from Arabidopsis thaliana (Mouse-ear cress).